Consider the following 353-residue polypeptide: Tectonin-2 (353 aa).

A Ricin B-type lectin domain is found at 44-93 (WIFDNDGYIRLAANHNLVLDVNGGAAKEGNTVLSYPDKKDHAKNQLWVNK). A run of 6 repeats spans residues 138 to 173 (SAWE…HWDG), 174 to 210 (SKWH…DRGT), 211 to 247 (NKWS…NADS), 248 to 282 (NSWT…HYNG), 283 to 318 (NSWD…LKHG), and 319 to 353 (KDWE…KALL). A 6 X approximate tandem repeats region spans residues 138 to 353 (SAWERHEGEL…SAHNIYKALL (216 aa)).

The protein belongs to the tectonin family.

Its subcellular location is the cell surface. It is found in the cytoplasmic vesicle membrane. Functionally, probably involved in bacterial recognition. May be a lectin that function as part of a transmembrane signaling complex during phagocytosis. This chain is Tectonin-2 (TECB), found in Physarum polycephalum (Slime mold).